A 356-amino-acid polypeptide reads, in one-letter code: Inactive ubiquitin thioesterase OTULINL (356 aa).

Residues 1-22 (MAATRSPTRARERERSGAPAAG) are disordered. A required for membrane binding region spans residues 1–83 (MAATRSPTRA…KWWIGYLQRK (83 aa)). The 229-residue stretch at 128 to 356 (KCVRQVRRDN…NDRHYHIPVF (229 aa)) folds into the OTU domain.

It belongs to the peptidase C65 family. Otulin subfamily. In terms of assembly, does not bind ubiquitin or ubiquitin-like proteins.

The protein localises to the cytoplasm. It is found in the endoplasmic reticulum membrane. The protein resides in the nucleus envelope. In terms of biological role, lacks deubiquitinase activity. In Homo sapiens (Human), this protein is Inactive ubiquitin thioesterase OTULINL.